Here is a 2070-residue protein sequence, read N- to C-terminus: Multiple PDZ domain protein (2070 aa).

The region spanning 1-63 (MLEAIDKNRA…SVQQLKDQVN (63 aa)) is the L27 domain. Residues 137–224 (VFELLKPPSG…TVQLVIARGS (88 aa)) form the PDZ 1 domain. S230 carries the post-translational modification Phosphoserine. PDZ domains are found at residues 257–337 (TIEL…ARGA) and 377–463 (DVEL…MRRG). Position 483 is a phosphoserine (S483). PDZ domains lie at 553 to 634 (VAHV…CRRT) and 700 to 786 (HIEL…VAKP). A phosphoserine mark is found at S790 and S1078. Positions 1008–1089 (TINIAKGNSS…IGPDIKITYV (82 aa)) constitute a PDZ 6 domain. Residues 1121 to 1140 (DIPELPEREEGEGEESELQN) form a disordered region. Positions 1151 to 1243 (RVELWREPSK…PVVFMVQSII (93 aa)) constitute a PDZ 7 domain. Position 1170 is an omega-N-methylarginine (R1170). The disordered stretch occupies residues 1278–1324 (ADKAPSQSESEPEKAPLCSVPPPPPSAFAEMGSDHTQSSASKISQDV). Positions 1311–1321 (DHTQSSASKIS) are enriched in polar residues. PDZ domains follow at residues 1350-1433 (MIEL…IRNK) and 1483-1564 (HLEL…HAEN). The tract at residues 1567-1612 (SQAVPSAAGAASGEKKNSSQSLMVPQSGSPEPESIRNTSRSSTPAI) is disordered. Residues 1584 to 1610 (SSQSLMVPQSGSPEPESIRNTSRSSTP) are compositionally biased toward polar residues. PDZ domains follow at residues 1629–1712 (TIEI…YRDE) and 1725–1807 (TIEL…GRIK). 2 positions are modified to phosphoserine: S1818 and S1824. PDZ domains lie at 1862-1948 (TVEM…VAGG) and 1987-2070 (SITL…MVLS).

In terms of assembly, interacts with CLDN5, DLG4, GRIN1, F11R/JAM, CLDN1, NG2, CRB1, MPP4 and PALS1. Interacts with HTR2A, HTR2B, HTR2C, PLEKHA1/TAPP1, PLEKHA2/TAPP2, CXADR, SYNGAP1, CAMK2A and CAMK2B. Interacts with FAT4 (via cytoplasmic domain). Interacts with DLL1. As to quaternary structure, (Microbial infection) Interacts with human adenovirus type 9 E4-ORF1 protein. (Microbial infection) Interacts with human papillomavirus 18/HPV18 protein E6. In terms of tissue distribution, expressed in heart, brain, placenta, liver, skeletal muscle, kidney and pancreas.

The protein localises to the cell membrane. It is found in the apical cell membrane. It localises to the postsynaptic density. The protein resides in the cell projection. Its subcellular location is the dendrite. The protein localises to the cell junction. It is found in the tight junction. It localises to the synapse. The protein resides in the synaptosome. In terms of biological role, member of the NMDAR signaling complex that may play a role in control of AMPAR potentiation and synaptic plasticity in excitatory synapses. Promotes clustering of HT2RC at the cell surface. The sequence is that of Multiple PDZ domain protein (MPDZ) from Homo sapiens (Human).